The sequence spans 441 residues: Ribulose bisphosphate carboxylase large chain (441 aa).

Position 5 is an N6,N6,N6-trimethyllysine (Lys5). Residues Asn114 and Thr164 each contribute to the substrate site. Lys166 functions as the Proton acceptor in the catalytic mechanism. Lys168 is a substrate binding site. 3 residues coordinate Mg(2+): Lys192, Asp194, and Glu195. Lys192 carries the post-translational modification N6-carboxylysine. Residue His285 is the Proton acceptor of the active site. Substrate is bound by residues Arg286, His318, and Ser370.

The protein belongs to the RuBisCO large chain family. Type I subfamily. As to quaternary structure, heterohexadecamer of 8 large chains and 8 small chains; disulfide-linked. The disulfide link is formed within the large subunit homodimers. The cofactor is Mg(2+). The disulfide bond which can form in the large chain dimeric partners within the hexadecamer appears to be associated with oxidative stress and protein turnover.

The protein resides in the plastid. It is found in the chloroplast. It carries out the reaction 2 (2R)-3-phosphoglycerate + 2 H(+) = D-ribulose 1,5-bisphosphate + CO2 + H2O. The enzyme catalyses D-ribulose 1,5-bisphosphate + O2 = 2-phosphoglycolate + (2R)-3-phosphoglycerate + 2 H(+). Functionally, ruBisCO catalyzes two reactions: the carboxylation of D-ribulose 1,5-bisphosphate, the primary event in carbon dioxide fixation, as well as the oxidative fragmentation of the pentose substrate in the photorespiration process. Both reactions occur simultaneously and in competition at the same active site. This is Ribulose bisphosphate carboxylase large chain from Pellaea andromedifolia (Coffee fern).